Reading from the N-terminus, the 498-residue chain is Calcium-binding tyrosine phosphorylation-regulated protein (498 aa).

Residues 12–49 (YGLKTLLEGVSRAILKINPPNITQFAAVYFKELIVFRE) form the RIIa domain. Disordered regions lie at residues 74-107 (GTTQEKEPECMEEQVETSVVSQEPTRMEKSTDTE), 135-164 (EETPEAACGGSPKPSTPKAVTPPSSPSPAA), and 247-279 (VDLGPKPKDDEAEPTTASSFPLQDEQDPPAYDQ). Over residues 145 to 164 (SPKPSTPKAVTPPSSPSPAA) the composition is skewed to low complexity.

As to quaternary structure, interacts with FSCB. Post-translationally, phosphorylated on tyrosine residues during in vitro capacitation. Dephosphorylation affects its ability to bind calcium. Expressed in testis.

The protein localises to the cytoplasm. It is found in the cytoskeleton. It localises to the cell projection. The protein resides in the cilium. Its subcellular location is the flagellum. Functionally, may function as a regulator of both motility- and head-associated functions such as capacitation and the acrosome reaction. Binds calcium in vitro. The protein is Calcium-binding tyrosine phosphorylation-regulated protein (CABYR) of Vulpes vulpes (Red fox).